The sequence spans 332 residues: Holliday junction branch migration complex subunit RuvB (332 aa).

The large ATPase domain (RuvB-L) stretch occupies residues 1-181 (MSRILDNEMM…FGITGHMEYY (181 aa)). ATP contacts are provided by residues L20, R21, G62, K65, T66, T67, 128–130 (EDF), R171, Y181, and R218. T66 serves as a coordination point for Mg(2+). Residues 182 to 252 (AHADLTEIVE…ITDKALTMLD (71 aa)) form a small ATPAse domain (RuvB-S) region. Positions 255–332 (HEGLDYVDQK…EHLGYEYSEK (78 aa)) are head domain (RuvB-H). Residues R291, R310, R312, and R315 each coordinate DNA.

This sequence belongs to the RuvB family. In terms of assembly, homohexamer. Forms an RuvA(8)-RuvB(12)-Holliday junction (HJ) complex. HJ DNA is sandwiched between 2 RuvA tetramers; dsDNA enters through RuvA and exits via RuvB. An RuvB hexamer assembles on each DNA strand where it exits the tetramer. Each RuvB hexamer is contacted by two RuvA subunits (via domain III) on 2 adjacent RuvB subunits; this complex drives branch migration. In the full resolvosome a probable DNA-RuvA(4)-RuvB(12)-RuvC(2) complex forms which resolves the HJ.

The protein resides in the cytoplasm. It carries out the reaction ATP + H2O = ADP + phosphate + H(+). The RuvA-RuvB-RuvC complex processes Holliday junction (HJ) DNA during genetic recombination and DNA repair, while the RuvA-RuvB complex plays an important role in the rescue of blocked DNA replication forks via replication fork reversal (RFR). RuvA specifically binds to HJ cruciform DNA, conferring on it an open structure. The RuvB hexamer acts as an ATP-dependent pump, pulling dsDNA into and through the RuvAB complex. RuvB forms 2 homohexamers on either side of HJ DNA bound by 1 or 2 RuvA tetramers; 4 subunits per hexamer contact DNA at a time. Coordinated motions by a converter formed by DNA-disengaged RuvB subunits stimulates ATP hydrolysis and nucleotide exchange. Immobilization of the converter enables RuvB to convert the ATP-contained energy into a lever motion, pulling 2 nucleotides of DNA out of the RuvA tetramer per ATP hydrolyzed, thus driving DNA branch migration. The RuvB motors rotate together with the DNA substrate, which together with the progressing nucleotide cycle form the mechanistic basis for DNA recombination by continuous HJ branch migration. Branch migration allows RuvC to scan DNA until it finds its consensus sequence, where it cleaves and resolves cruciform DNA. The protein is Holliday junction branch migration complex subunit RuvB of Streptococcus pneumoniae serotype 19F (strain G54).